We begin with the raw amino-acid sequence, 148 residues long: Vascular endothelial growth factor homolog (148 aa).

The signal sequence occupies residues 1–25 (MKLTATLQVVVALLICMYNLPECVS). Intrachain disulfides connect Cys-46–Cys-88, Cys-77–Cys-130, and Cys-81–Cys-132. N-linked (GlcNAc...) asparagine; by host glycosylation occurs at Asn-95.

It belongs to the PDGF/VEGF growth factor family. In terms of assembly, homodimer; disulfide-linked.

The protein resides in the secreted. Functionally, induces endothelial proliferation. The sequence is that of Vascular endothelial growth factor homolog from Orf virus (strain NZ7) (OV NZ-7).